The following is a 115-amino-acid chain: Somatostatin-2 (115 aa).

An N-terminal signal peptide occupies residues 1–18 (MKVCRIHCALALLGLALA). Residues 19-87 (ICSQGAASQP…KEDLRVELER (69 aa)) constitute a propeptide that is removed on maturation. A disulfide bridge connects residues Cys-104 and Cys-115.

This sequence belongs to the somatostatin family.

Its subcellular location is the secreted. Somatostatin inhibits the release of somatotropin. The polypeptide is Somatostatin-2 (sst2) (Oncorhynchus mykiss (Rainbow trout)).